Here is a 445-residue protein sequence, read N- to C-terminus: Phosphoglucosamine mutase (445 aa).

Serine 101 serves as the catalytic Phosphoserine intermediate. Serine 101, aspartate 240, aspartate 242, and aspartate 244 together coordinate Mg(2+). A Phosphoserine modification is found at serine 101.

This sequence belongs to the phosphohexose mutase family. Requires Mg(2+) as cofactor. In terms of processing, activated by phosphorylation.

It carries out the reaction alpha-D-glucosamine 1-phosphate = D-glucosamine 6-phosphate. Catalyzes the conversion of glucosamine-6-phosphate to glucosamine-1-phosphate. In Pseudomonas aeruginosa (strain UCBPP-PA14), this protein is Phosphoglucosamine mutase.